Consider the following 100-residue polypeptide: Large ribosomal subunit protein uL23 (100 aa).

The protein belongs to the universal ribosomal protein uL23 family. As to quaternary structure, part of the 50S ribosomal subunit. Contacts protein L29, and trigger factor when it is bound to the ribosome.

One of the early assembly proteins it binds 23S rRNA. One of the proteins that surrounds the polypeptide exit tunnel on the outside of the ribosome. Forms the main docking site for trigger factor binding to the ribosome. This is Large ribosomal subunit protein uL23 from Synechococcus sp. (strain WH7803).